The primary structure comprises 260 residues: 14-3-3-like protein (260 aa).

The segment at 240–260 (DMQDDGGDEIKEAAPKPDEQY) is disordered. Over residues 247-260 (DEIKEAAPKPDEQY) the composition is skewed to basic and acidic residues.

It belongs to the 14-3-3 family.

This Oenothera elata subsp. hookeri (Hooker's evening primrose) protein is 14-3-3-like protein.